Consider the following 676-residue polypeptide: Mucin-1 (676 aa).

An N-terminal signal peptide occupies residues 1–25 (MTPGIRAPFLLTLLLALVTDPNSVA). The interval 25–387 (ALSQDTSSSS…VHNGSLVPTT (363 aa)) is disordered. Over 26–582 (LSQDTSSSST…QSWPGVPGWG (557 aa)) the chain is Extracellular. Repeat copies occupy residues 40–59 (PVHSGSSAPATSSAVDSATT), 60–79 (PGHSGSSAPPTSSAVNSATT), 80–99 (PGHSGSSAPPTSSAVNSATT), 100–119 (PVHSGSSAPVTSSAVNSATT), 120–139 (PVHSGSSAPPTSSAVNSATT), 140–159 (PVHSGSSAPVTSSAVNSATT), 160–179 (PVHSGSSAPVTSSAVDSATT), 180–199 (PVHSGSSAPPTSSAVNSATT), 200–219 (PVHSGSSAPVTSSAVNSATT), 220–239 (PVHSGSSAPVTSSAVNSATT), 240–259 (PVHSGSSAPPTSSVVNSATT), 260–279 (PVHSGSSAPPTSSAVNLATT), and 280–299 (PVHSGSSTPATNSTTDSATT). The interval 40–314 (PVHSGSSAPA…SSMQTTEAIS (275 aa)) is 13 X approximate tandem repeats of P-V-H-S-G-S-S-A-P-P-T-S-S-A-V-N-S-A-T-T. O-linked (GalNAc...) serine glycans are attached at residues Ser43, Ser45, and Ser46. Thr50 carries an O-linked (GalNAc...) threonine glycan. O-linked (GalNAc...) serine glycans are attached at residues Ser51, Ser52, and Ser56. O-linked (GalNAc...) threonine glycans are attached at residues Thr58 and Thr59. N-linked (GlcNAc...) asparagine glycosylation is found at Asn291, Asn323, Asn350, Asn380, Asn400, Asn413, Asn435, Asn479, Asn496, and Asn536. Residues 404–420 (TMATTTPVGNGTQSSVP) show a composition bias toward polar residues. Residues 404–434 (TMATTTPVGNGTQSSVPSRHPVTPTPPAVSS) are disordered. The SEA domain occupies 463 to 570 (GVSFFLLSFH…INVGEMQFPS (108 aa)). The chain crosses the membrane as a helical span at residues 583 to 603 (IALLVLVCILVALAIVYLIAL). The Cytoplasmic portion of the chain corresponds to 604–676 (AVCQCRRKNY…PVVATTSANL (73 aa)). Residues Cys606 and Cys608 are each lipidated (S-palmitoyl cysteine). Residues 614-650 (GQLDIFPIQDSYHPMSEYPTYHTHGRYVPPGSTKRSP) form an interaction with P53 region. Phosphotyrosine; by PDGFR is present on Tyr625. The Interaction with GRB2 signature appears at 625-628 (YHPM). The residue at position 634 (Tyr634) is a Phosphotyrosine. The interval 636–659 (THGRYVPPGSTKRSPYEEVSAGNG) is disordered. Tyr640 bears the Phosphotyrosine; by PDGFR mark. The required for interaction with GSK3B stretch occupies residues 645-652 (STKRSPYE). Thr646 bears the Phosphothreonine; by PKC/PRKCD mark. Ser649 is subject to Phosphoserine; by GSK3-beta. Tyr651 carries the post-translational modification Phosphotyrosine; by CSK, EGFR and SRC. An Interaction with SRC and ESR1 motif is present at residues 651–654 (YEEV). The required for interaction with beta- and gamma-catenins stretch occupies residues 655–662 (SAGNGSSL). Residue Tyr664 is modified to Phosphotyrosine. The Required for interaction with AP1S2 signature appears at 664 to 667 (YTNP).

In terms of assembly, the alpha subunit forms a tight, non-covalent heterodimeric complex with the proteolytically-released beta-subunit. Binds directly the SH2 domain of GRB2, and forms a MUC1/GRB2/SOS1 complex involved in RAS signaling. The cytoplasmic tail (MUC1CT) interacts with several proteins such as SRC, CTNNB1 and ERBs. Interaction with the SH2 domain of CSK decreases interaction with GSK3B. Interacts with CTNNB1/beta-catenin and JUP/gamma-catenin and promotes cell adhesion. Interaction with JUP/gamma-catenin is induced by heregulin. Binds PRKCD, ERBB2, ERBB3 and ERBB4. Heregulin (HRG) stimulates the interaction with ERBB2 and, to a much lesser extent, the interaction with ERBB3 and ERBB4. Interacts with P53 in response to DNA damage. Interacts with KLF4. Interacts with estrogen receptor alpha/ESR1, through its DNA-binding domain, and stimulates its transcription activity. Binds ADAM17. Probably both N- and O-glycosylated (in repeat region). In terms of processing, proteolytic cleavage in the SEA domain occurs in the endoplasmic reticulum by an autoproteolytic mechanism and requires the full-length SEA domain as well as requiring a Ser, Thr or Cys residue at the P + 1 site. Ectodomain shedding is mediated by ADAM17 in uterine epithelial cells. Post-translationally, dual palmitoylation on cysteine residues in the CQC motif is required for recycling from endosomes back to the plasma membrane. Phosphorylated on tyrosines and serine residues in the C-terminal. Phosphorylation on tyrosines in the C-terminal increases the nuclear location of MUC1 and beta-catenin. Phosphorylation by PKC delta induces binding of MUC1 to beta-catenin/CTNNB1 and thus decreases the formation of the beta-catenin/E-cadherin complex. Src-mediated phosphorylation inhibits interaction with GSK3B. Csk- or Src- or EGFR-mediated phosphorylation on Tyr-651 increases binding to beta-catenin/CTNNB1. GSK3B-mediated phosphorylation on Ser-649 decreases this interaction but restores the formation of the beta-cadherin/E-cadherin complex. On T-cell receptor activation, phosphorylated by LCK. PDGFR-mediated phosphorylation increases nuclear colocalization of MUC1CT and CTNNB1.

It is found in the apical cell membrane. The protein localises to the cell membrane. It localises to the cytoplasm. The protein resides in the nucleus. The alpha subunit has cell adhesive properties. Can act both as an adhesion and an anti-adhesion protein. May provide a protective layer on epithelial cells against bacterial and enzyme attack. Functionally, the beta subunit contains a C-terminal domain which is involved in cell signaling, through phosphorylations and protein-protein interactions. Modulates signaling in ERK, Src and NF-kappaB pathways. In activated T-cells, influences directly or indirectly the Ras/MAPK pathway. Promotes tumor progression. Regulates P53-mediated transcription and determines cell fate in the genotoxic stress response. Binds, together with KLF4, the PE21 promoter element of P53 and represses P53 activity. The polypeptide is Mucin-1 (MUC1) (Mesocricetus auratus (Golden hamster)).